Reading from the N-terminus, the 476-residue chain is Ubiquinone biosynthesis monooxygenase COQ6, mitochondrial (476 aa).

A mitochondrion-targeting transit peptide spans 1-42 (MAARIGPMAGLLCVRWWSTAQLAARGGPLVACRRWTSSSTDS).

The protein belongs to the UbiH/COQ6 family. Component of a multi-subunit COQ enzyme complex, composed of at least COQ3, COQ4, COQ5, COQ6, COQ7 and COQ9. Interacts with COQ8B and COQ7. FAD serves as cofactor. In terms of tissue distribution, in the kidney, expressed almost exclusively in glomerular podocytes. In the inner ear, expressed in the spiral ganglion, as well as in stria vascularis and spiral ligament cells.

Its subcellular location is the mitochondrion inner membrane. The protein resides in the golgi apparatus. It localises to the cell projection. It carries out the reaction 4-hydroxy-3-(all-trans-decaprenyl)benzoate + 2 reduced [2Fe-2S]-[ferredoxin] + O2 + 2 H(+) = 3,4-dihydroxy-5-(all-trans-decaprenyl)benzoate + 2 oxidized [2Fe-2S]-[ferredoxin] + H2O. The catalysed reaction is 2-methoxy-6-(all-trans-decaprenyl)phenol + 2 reduced [2Fe-2S]-[ferredoxin] + O2 + 2 H(+) = 2-methoxy-6-(all-trans-decaprenyl)benzene-1,4-diol + 2 oxidized [2Fe-2S]-[ferredoxin] + H2O. Its pathway is cofactor biosynthesis; ubiquinone biosynthesis. In terms of biological role, FAD-dependent monooxygenase required for two non-consecutive steps during ubiquinone biosynthesis. Required for the C5-ring hydroxylation during ubiquinone biosynthesis by catalyzing the hydroxylation of 4-hydroxy-3-(all-trans-decaprenyl)benzoic acid to 3,4-dihydroxy-5-(all-trans-decaprenyl)benzoic acid. Also acts downstream of COQ4, for the C1-hydroxylation during ubiquinone biosynthesis by catalyzing the hydroxylation of 2-methoxy-6-(all-trans-decaprenyl)phenol to 2-methoxy-6-(all-trans-decaprenyl)benzene-1,4-diol. The electrons required for the hydroxylation reaction are funneled indirectly to COQ6 from NADPH via a ferredoxin/ferredoxin reductase system composed of FDX2 and FDXR. The chain is Ubiquinone biosynthesis monooxygenase COQ6, mitochondrial from Rattus norvegicus (Rat).